We begin with the raw amino-acid sequence, 121 residues long: Flagellar protein FliT (121 aa).

The interval Met-1–Leu-50 is required for homodimerization. Positions Met-60 to Val-98 are fliD binding.

The protein belongs to the FliT family. In terms of assembly, homodimer. Interacts with FliD and FlhC.

The protein resides in the cytoplasm. The protein localises to the cytosol. Its function is as follows. Dual-function protein that regulates the transcription of class 2 flagellar operons and that also acts as an export chaperone for the filament-capping protein FliD. As a transcriptional regulator, acts as an anti-FlhDC factor; it directly binds FlhC, thus inhibiting the binding of the FlhC/FlhD complex to class 2 promoters, resulting in decreased expression of class 2 flagellar operons. As a chaperone, effects FliD transition to the membrane by preventing its premature polymerization, and by directing it to the export apparatus. The protein is Flagellar protein FliT of Escherichia coli (strain ATCC 8739 / DSM 1576 / NBRC 3972 / NCIMB 8545 / WDCM 00012 / Crooks).